The sequence spans 122 residues: Large ribosomal subunit protein uL14 (122 aa).

Belongs to the universal ribosomal protein uL14 family. In terms of assembly, part of the 50S ribosomal subunit. Forms a cluster with proteins L3 and L19. In the 70S ribosome, L14 and L19 interact and together make contacts with the 16S rRNA in bridges B5 and B8.

Binds to 23S rRNA. Forms part of two intersubunit bridges in the 70S ribosome. This Mycoplasma genitalium (strain ATCC 33530 / DSM 19775 / NCTC 10195 / G37) (Mycoplasmoides genitalium) protein is Large ribosomal subunit protein uL14.